The sequence spans 512 residues: Maturase K (512 aa).

Belongs to the intron maturase 2 family. MatK subfamily.

The protein localises to the plastid. It is found in the chloroplast. Usually encoded in the trnK tRNA gene intron. Probably assists in splicing its own and other chloroplast group II introns. In Lemna aequinoctialis (Lesser duckweed), this protein is Maturase K.